A 293-amino-acid chain; its full sequence is Acetylglutamate kinase (293 aa).

Substrate is bound by residues 68-69, Arg90, and Asn189; that span reads GG.

It belongs to the acetylglutamate kinase family. ArgB subfamily.

Its subcellular location is the cytoplasm. The catalysed reaction is N-acetyl-L-glutamate + ATP = N-acetyl-L-glutamyl 5-phosphate + ADP. It functions in the pathway amino-acid biosynthesis; L-arginine biosynthesis; N(2)-acetyl-L-ornithine from L-glutamate: step 2/4. In terms of biological role, catalyzes the ATP-dependent phosphorylation of N-acetyl-L-glutamate. The polypeptide is Acetylglutamate kinase (Mycobacterium marinum (strain ATCC BAA-535 / M)).